The primary structure comprises 24 residues: Superoxide dismutase [Cu-Zn] (24 aa).

Belongs to the Cu-Zn superoxide dismutase family. As to quaternary structure, homodimer. Cu cation serves as cofactor. Zn(2+) is required as a cofactor.

Its subcellular location is the cytoplasm. The enzyme catalyses 2 superoxide + 2 H(+) = H2O2 + O2. In terms of biological role, destroys radicals which are normally produced within the cells and which are toxic to biological systems. This chain is Superoxide dismutase [Cu-Zn] (sod1), found in Aquarana catesbeiana (American bullfrog).